Here is a 430-residue protein sequence, read N- to C-terminus: Putative aspergillopepsin A-like aspartic endopeptidase MCYG_07979 (430 aa).

Positions 1-17 are cleaved as a signal peptide; it reads MHLSSLLVAVLLPLALS. Positions 18–87 are cleaved as a propeptide — activation peptide; sequence KPTPRKKPGS…SKIAGGAPGA (70 aa). The segment at 59-105 is disordered; it reads STQGMDGYRPEPISRFQGNSKIAGGAPGAKDDGKDEKGEVENNPTSH. Over residues 87–98 the composition is skewed to basic and acidic residues; the sequence is AKDDGKDEKGEV. The region spanning 109–427 is the Peptidase A1 domain; sequence FLSPVTIGGQ…DYRGPSVSLA (319 aa). Residue aspartate 125 is part of the active site. A glycan (N-linked (GlcNAc...) asparagine) is linked at asparagine 306. Aspartate 314 is an active-site residue. N-linked (GlcNAc...) asparagine glycosylation is present at asparagine 352.

It belongs to the peptidase A1 family.

Its subcellular location is the secreted. The sequence is that of Putative aspergillopepsin A-like aspartic endopeptidase MCYG_07979 from Arthroderma otae (strain ATCC MYA-4605 / CBS 113480) (Microsporum canis).